We begin with the raw amino-acid sequence, 307 residues long: Methionyl-tRNA formyltransferase (307 aa).

108 to 111 lines the (6S)-5,6,7,8-tetrahydrofolate pocket; that stretch reads SLLP.

Belongs to the Fmt family.

It catalyses the reaction L-methionyl-tRNA(fMet) + (6R)-10-formyltetrahydrofolate = N-formyl-L-methionyl-tRNA(fMet) + (6S)-5,6,7,8-tetrahydrofolate + H(+). In terms of biological role, attaches a formyl group to the free amino group of methionyl-tRNA(fMet). The formyl group appears to play a dual role in the initiator identity of N-formylmethionyl-tRNA by promoting its recognition by IF2 and preventing the misappropriation of this tRNA by the elongation apparatus. The polypeptide is Methionyl-tRNA formyltransferase (Xylella fastidiosa (strain M23)).